Reading from the N-terminus, the 681-residue chain is MKTIYFLISLILIQSIKTLPVLEIASNSQPQDVDSVCSGTLQKTEDVHLMGFTLSGQKVADSPLEASKRWAFRTGVPPKNVEYTEGEEAKTCYNISVTDPSGKSLLLDPPSNIRDYPKCKTVHHIQGQNPHAQGIALHLWGAFFLYDRVASTTMYRGKVFTEGNIAAMIVNKTVHRMIFSRQGQGYRHMNLTSTNKYWTSSNETQRNDTGCFGILQEYNSTNNQTCPPSLKPPSLPTVTPSIHSTNTQINTAKSGTMNPSSDDEDLMISGSGSGEQGPHTTLNVVTEQKQSSTILSTPSLHPSTSQHEQNSTNPSRHAVTEHNGTDPTTQPATLLNNTNTTPTYNTLKYNLSTPSPPTRNITNNDTQRELAESEQTNAQLNTTLDPTENPTTGQDTNSTTNIIMTTSDITSKHPTNSSPDSSPTTRPPIYFRKKRSIFWKEGDIFPFLDGLINTEIDFDPIPNTETIFDESPSFNTSTNEEQHTPPNISLTFSYFPDKNGDTAYSGENENDCDAELRIWSVQEDDLAAGLSWIPFFGPGIEGLYTAGLIKNQNNLVCRLRRLANQTAKSLELLLRVTTEERTFSLINRHAIDFLLTRWGGTCKVLGPDCCIGIEDLSKNISEQIDKIRKDEQKEETGWGLGGKWWTSDWGVLTNLGILLLLSIAVLIALSCICRIFTKYIG.

Residues 1-18 (MKTIYFLISLILIQSIKT) form the signal peptide. Residues 19–648 (LPVLEIASNS…GLGGKWWTSD (630 aa)) are Extracellular-facing. The receptor-binding stretch occupies residues 38 to 188 (SGTLQKTEDV…FSRQGQGYRH (151 aa)). N94, N171, N190, N202, N207, N219, and N223 each carry an N-linked (GlcNAc...) asparagine; by host glycan. Positions 223 to 428 (NQTCPPSLKP…PDSSPTTRPP (206 aa)) are disordered. Composition is skewed to polar residues over residues 236 to 260 (PTVTPSIHSTNTQINTAKSGTMNPS) and 278 to 315 (PHTTLNVVTEQKQSSTILSTPSLHPSTSQHEQNSTNPS). Residues 277-455 (GPHTTLNVVT…PFLDGLINTE (179 aa)) form a mucin-like region region. N310, N323, N336, N350, N360, N364, N381, N397, N475, and N487 each carry an N-linked (GlcNAc...) asparagine; by host glycan. Residues 327-347 (PTTQPATLLNNTNTTPTYNTL) show a composition bias toward low complexity. 2 stretches are compositionally biased toward polar residues: residues 348 to 365 (KYNLSTPSPPTRNITNND) and 373 to 394 (SEQTNAQLNTTLDPTENPTTGQ). The segment covering 395–428 (DTNSTTNIIMTTSDITSKHPTNSSPDSSPTTRPP) has biased composition (low complexity). Residues 529–549 (GLSWIPFFGPGIEGLYTAGLI) are fusion peptide. N-linked (GlcNAc...) asparagine; by host glycans are attached at residues N564 and N619. Residues 649 to 669 (WGVLTNLGILLLLSIAVLIAL) traverse the membrane as a helical segment. At 670 to 681 (SCICRIFTKYIG) the chain is on the cytoplasmic side. Residues C671 and C673 are each lipidated (S-palmitoyl cysteine; by host).

The protein belongs to the filoviruses glycoprotein family. As to quaternary structure, homotrimer; each monomer consists of a GP1 and a GP2 subunit linked by disulfide bonds. The resulting peplomers (GP1,2) protrude from the virus surface as spikes. GP1,2 interacts with human CD209 and CLEC4M (collectively referred to as DC-SIGN(R)). Asialoglycoprotein receptor (ASGP-R) may be a liver-specific receptor for GP1,2. Members of the Tyro3 receptor tyrosine kinase family may be cell entry factors interacting with GP1,2. N-glycosylated. In terms of processing, O-glycosylated in the mucin-like region. Post-translationally, specific enzymatic cleavages in vivo yield mature proteins. The precursor is processed into GP1 and GP2 by host cell furin in the trans Golgi, and maybe by other host proteases, to yield the mature GP1 and GP2 proteins. The cleavage site corresponds to the furin optimal cleavage sequence [KR]-X-[KR]-R. GP1 is phosphorylated on serine residues between residues 260 and 273.

It is found in the virion membrane. The protein resides in the host cell membrane. Functionally, GP1 is responsible for binding to the receptor(s) on target cells. Interacts with CD209/DC-SIGN and CLEC4M/DC-SIGNR which act as cofactors for virus entry into the host cell. Binding to CD209 and CLEC4M, which are respectively found on dendritic cells (DCs), and on endothelial cells of liver sinusoids and lymph node sinuses, facilitate infection of macrophages and endothelial cells. These interactions not only facilitate virus cell entry, but also allow capture of viral particles by DCs and subsequent transmission to susceptible cells without DCs infection (trans infection). Its function is as follows. GP2 acts as a class I viral fusion protein. Under the current model, the protein has at least 3 conformational states: pre-fusion native state, pre-hairpin intermediate state, and post-fusion hairpin state. During viral and target cell membrane fusion, the coiled coil regions (heptad repeats) assume a trimer-of-hairpins structure, positioning the fusion peptide in close proximity to the C-terminal region of the ectodomain. The formation of this structure appears to drive apposition and subsequent fusion of viral and target cell membranes. Responsible for penetration of the virus into the cell cytoplasm by mediating the fusion of the membrane of the endocytosed virus particle with the endosomal membrane. Low pH in endosomes induces an irreversible conformational change in GP2, releasing the fusion hydrophobic peptide. The polypeptide is Envelope glycoprotein (GP) (Chlorocebus aethiops (Green monkey)).